A 275-amino-acid polypeptide reads, in one-letter code: tRNA (guanine-N(1)-)-methyltransferase (275 aa).

Residues G124 and 149 to 154 (IGDYVL) contribute to the S-adenosyl-L-methionine site.

It belongs to the RNA methyltransferase TrmD family. In terms of assembly, homodimer.

It is found in the cytoplasm. It catalyses the reaction guanosine(37) in tRNA + S-adenosyl-L-methionine = N(1)-methylguanosine(37) in tRNA + S-adenosyl-L-homocysteine + H(+). Functionally, specifically methylates guanosine-37 in various tRNAs. The sequence is that of tRNA (guanine-N(1)-)-methyltransferase from Bifidobacterium animalis subsp. lactis (strain AD011).